The chain runs to 201 residues: MRLERLAVNKIKVFLTFDDLKERGITKDELWQDIPKVHDLFRDMMLEADDELGFKADGPIAVEVFALPAQGMVIIVTKGHQESDFDEDGLEDGYIEMQVTLDESDEVFYEFADIEDVISLVPRLVTLGMTGGTLYSYQGRYYISFTDLDLDGIDEESLIALLAEYGYPSTISTYRVAEYGSLIIANDACIKLYQSFFKART.

It belongs to the MecA family. In terms of assembly, homodimer.

Functionally, enables the recognition and targeting of unfolded and aggregated proteins to the ClpC protease or to other proteins involved in proteolysis. Acts negatively in the development of competence by binding ComK and recruiting it to the ClpCP protease. When overexpressed, inhibits sporulation. Also involved in Spx degradation by ClpC. In Halalkalibacterium halodurans (strain ATCC BAA-125 / DSM 18197 / FERM 7344 / JCM 9153 / C-125) (Bacillus halodurans), this protein is Adapter protein MecA 1 (mecA1).